The following is a 358-amino-acid chain: L-Ala-D/L-Glu epimerase (358 aa).

Positions 24, 135, and 160 each coordinate substrate. K162 functions as the Proton acceptor; specific for (R)-substrate epimerization in the catalytic mechanism. Positions 190, 218, and 243 each coordinate Mg(2+). K267 acts as the Proton acceptor; specific for (S)-substrate epimerization in catalysis. The substrate site is built by C295, D320, and D322.

It belongs to the mandelate racemase/muconate lactonizing enzyme family. Mg(2+) is required as a cofactor.

The enzyme catalyses L-alanyl-L-glutamate = L-alanyl-D-glutamate. It functions in the pathway cell wall degradation; peptidoglycan degradation. Functionally, catalyzes the epimerization of L-Ala-D-Glu to L-Ala-L-Glu and has probably a role in the metabolism of the murein peptide, of which L-Ala-D-Glu is a component. Is also able to catalyze the epimerization of L-Ala-D-Asp. The polypeptide is L-Ala-D/L-Glu epimerase (Clostridium acetobutylicum (strain ATCC 824 / DSM 792 / JCM 1419 / IAM 19013 / LMG 5710 / NBRC 13948 / NRRL B-527 / VKM B-1787 / 2291 / W)).